A 432-amino-acid polypeptide reads, in one-letter code: Methylenetetrahydrofolate--tRNA-(uracil-5-)-methyltransferase TrmFO (432 aa).

7–12 provides a ligand contact to FAD; it reads GGGLAG.

It belongs to the MnmG family. TrmFO subfamily. FAD serves as cofactor.

It is found in the cytoplasm. It catalyses the reaction uridine(54) in tRNA + (6R)-5,10-methylene-5,6,7,8-tetrahydrofolate + NADH + H(+) = 5-methyluridine(54) in tRNA + (6S)-5,6,7,8-tetrahydrofolate + NAD(+). The catalysed reaction is uridine(54) in tRNA + (6R)-5,10-methylene-5,6,7,8-tetrahydrofolate + NADPH + H(+) = 5-methyluridine(54) in tRNA + (6S)-5,6,7,8-tetrahydrofolate + NADP(+). Catalyzes the folate-dependent formation of 5-methyl-uridine at position 54 (M-5-U54) in all tRNAs. The chain is Methylenetetrahydrofolate--tRNA-(uracil-5-)-methyltransferase TrmFO from Coprothermobacter proteolyticus (strain ATCC 35245 / DSM 5265 / OCM 4 / BT).